The following is a 483-amino-acid chain: Malonate-semialdehyde dehydrogenase 2 (483 aa).

NAD(+) is bound by residues F152, K176, E179, R180, and S229. The active-site Nucleophile is the C284. Residue E384 participates in NAD(+) binding.

It belongs to the aldehyde dehydrogenase family. IolA subfamily. Homotetramer.

The catalysed reaction is 3-oxopropanoate + NAD(+) + CoA + H2O = hydrogencarbonate + acetyl-CoA + NADH + H(+). The enzyme catalyses 2-methyl-3-oxopropanoate + NAD(+) + CoA + H2O = propanoyl-CoA + hydrogencarbonate + NADH + H(+). Its pathway is polyol metabolism; myo-inositol degradation into acetyl-CoA; acetyl-CoA from myo-inositol: step 7/7. Functionally, catalyzes the oxidation of malonate semialdehyde (MSA) and methylmalonate semialdehyde (MMSA) into acetyl-CoA and propanoyl-CoA, respectively. Is involved in a myo-inositol catabolic pathway. Bicarbonate, and not CO2, is the end-product of the enzymatic reaction. This Geobacillus thermodenitrificans (strain NG80-2) protein is Malonate-semialdehyde dehydrogenase 2.